Here is a 502-residue protein sequence, read N- to C-terminus: Glycerol kinase (502 aa).

T14 provides a ligand contact to ADP. ATP is bound by residues T14, T15, and S16. T14 serves as a coordination point for sn-glycerol 3-phosphate. R18 is a binding site for ADP. Sn-glycerol 3-phosphate contacts are provided by R84, E85, and Y136. Positions 84, 85, and 136 each coordinate glycerol. H232 carries the post-translational modification Phosphohistidine; by HPr. D246 lines the sn-glycerol 3-phosphate pocket. Glycerol-binding residues include D246 and Q247. ADP contacts are provided by T268 and G311. 4 residues coordinate ATP: T268, G311, Q315, and G412. ADP is bound by residues G412 and N416.

Belongs to the FGGY kinase family. As to quaternary structure, homotetramer and homodimer (in equilibrium). The phosphoenolpyruvate-dependent sugar phosphotransferase system (PTS), including enzyme I, and histidine-containing protein (HPr) are required for the phosphorylation, which leads to the activation of the enzyme.

The enzyme catalyses glycerol + ATP = sn-glycerol 3-phosphate + ADP + H(+). It functions in the pathway polyol metabolism; glycerol degradation via glycerol kinase pathway; sn-glycerol 3-phosphate from glycerol: step 1/1. With respect to regulation, activated by phosphorylation and inhibited by fructose 1,6-bisphosphate (FBP). Key enzyme in the regulation of glycerol uptake and metabolism. Catalyzes the phosphorylation of glycerol to yield sn-glycerol 3-phosphate. This Streptococcus pneumoniae (strain Hungary19A-6) protein is Glycerol kinase.